A 233-amino-acid polypeptide reads, in one-letter code: Nickel import system ATP-binding protein NikE (233 aa).

The ABC transporter domain occupies 2–228 (IELKHVTFGY…DRHPYTKELV (227 aa)). 35-42 (GESGCGKS) contributes to the ATP binding site.

The protein belongs to the ABC transporter superfamily. The complex is composed of two ATP-binding proteins (NikD and NikE), two transmembrane proteins (NikB and NikC) and a solute-binding protein (NikA).

The protein resides in the cell membrane. The enzyme catalyses Ni(2+)(out) + ATP + H2O = Ni(2+)(in) + ADP + phosphate + H(+). Its function is as follows. Part of the ABC transporter complex NikABCDE (Opp2) involved in nickel import. Probably responsible for energy coupling to the transport system. The sequence is that of Nickel import system ATP-binding protein NikE from Staphylococcus aureus (strain MRSA252).